The primary structure comprises 78 residues: Chassatide C4 (78 aa).

The signal sequence occupies residues 1-23; the sequence is MAKFATQLFLLTASVVMLEVQSS. A propeptide spans 24-42 (removed in mature form); the sequence is IVIMQDPDLGRKLIMNPAN. The cyclopeptide (Gly-Asn) cross-link spans 43–71; it reads GASCGETCFTGICFTAGCSCNPWPTCTRN. Intrachain disulfides connect C46/C60, C50/C62, and C55/C68. Residues 72-78 constitute a propeptide, removed in mature form; sequence GLNPESI.

This is a cyclic peptide.

In terms of biological role, probably participates in a plant defense mechanism. This is Chassatide C4 from Chassalia chartacea (Chassalia curviflora).